The primary structure comprises 215 residues: Pyridoxine/pyridoxamine 5'-phosphate oxidase (215 aa).

Substrate is bound by residues 9–12 and K69; that span reads RRDY. FMN contacts are provided by residues 64-69, 79-80, K86, and Q108; these read RVLLLK and FT. Residues Y126, R130, and S134 each contribute to the substrate site. Residues 143–144 and W188 contribute to the FMN site; that span reads QS. 194 to 196 contacts substrate; that stretch reads RLH. FMN is bound at residue R198.

Belongs to the pyridoxamine 5'-phosphate oxidase family. In terms of assembly, homodimer. It depends on FMN as a cofactor.

It catalyses the reaction pyridoxamine 5'-phosphate + O2 + H2O = pyridoxal 5'-phosphate + H2O2 + NH4(+). The enzyme catalyses pyridoxine 5'-phosphate + O2 = pyridoxal 5'-phosphate + H2O2. It participates in cofactor metabolism; pyridoxal 5'-phosphate salvage; pyridoxal 5'-phosphate from pyridoxamine 5'-phosphate: step 1/1. The protein operates within cofactor metabolism; pyridoxal 5'-phosphate salvage; pyridoxal 5'-phosphate from pyridoxine 5'-phosphate: step 1/1. Catalyzes the oxidation of either pyridoxine 5'-phosphate (PNP) or pyridoxamine 5'-phosphate (PMP) into pyridoxal 5'-phosphate (PLP). The sequence is that of Pyridoxine/pyridoxamine 5'-phosphate oxidase from Pseudomonas putida (strain GB-1).